The sequence spans 344 residues: Anthranilate phosphoribosyltransferase (344 aa).

5-phospho-alpha-D-ribose 1-diphosphate-binding positions include Gly-80, 83–84 (GD), Thr-88, 90–93 (NVST), 108–116 (KHGNRSVSS), and Ser-120. Gly-80 provides a ligand contact to anthranilate. A Mg(2+)-binding site is contributed by Ser-92. Anthranilate is bound at residue Asn-111. Arg-166 contacts anthranilate. Residues Asp-225 and Glu-226 each contribute to the Mg(2+) site.

Belongs to the anthranilate phosphoribosyltransferase family. Homodimer. Requires Mg(2+) as cofactor.

The catalysed reaction is N-(5-phospho-beta-D-ribosyl)anthranilate + diphosphate = 5-phospho-alpha-D-ribose 1-diphosphate + anthranilate. The protein operates within amino-acid biosynthesis; L-tryptophan biosynthesis; L-tryptophan from chorismate: step 2/5. Catalyzes the transfer of the phosphoribosyl group of 5-phosphorylribose-1-pyrophosphate (PRPP) to anthranilate to yield N-(5'-phosphoribosyl)-anthranilate (PRA). This is Anthranilate phosphoribosyltransferase from Legionella pneumophila (strain Paris).